Consider the following 39-residue polypeptide: Omega-theraphotoxin-Asp1a (39 aa).

3 cysteine pairs are disulfide-bonded: cysteine 4/cysteine 25, cysteine 8/cysteine 31, and cysteine 17/cysteine 36.

Expressed by the venom gland.

Its subcellular location is the secreted. Functionally, toxin that inhibits voltage-gated calcium channels in rat cerebellar granule cells (IC(50)&lt;200 nM). Is lethal to cockroaches. The sequence is that of Omega-theraphotoxin-Asp1a from Aphonopelma sp. (American tarantula).